Consider the following 394-residue polypeptide: MASLDSHVLMKLGSLFLSTLFVSIVSSESQCRNFESIISFGDSIADTGNLLGLSDHNNLPMSAFPPYGETFFHHPTGRFSDGRLIIDFIAEFLGLPYVPPYFGSTNGNFEKGVNFAVASATALESSFLEEKGYHCPHNFSLGVQLKIFKQSLPNLCGLPSDCRDMIGNALILMGEIGANDYNFPFFQLRPLDEVKELVPLVISTISSAITELIGMGGRTFLVPGGFPLGCSVAFLTLHQTSNMEEYDPLTGCLKWLNKFGEYHSEQLQEELNRLRKLNPHVNIIYADYYNASLRLGREPSKYGFINRHLSACCGVGGPYNFNLSRSCGSVGVEACSDPSKYVAWDGLHMTEAAHKSMADGLVKGPYAIPPFDWSCLSSMIKKKEVVGNTIFFDE.

An N-terminal signal peptide occupies residues 1-27; sequence MASLDSHVLMKLGSLFLSTLFVSIVSS. S43 serves as the catalytic Nucleophile. N-linked (GlcNAc...) asparagine glycans are attached at residues N138, N290, and N322. Catalysis depends on residues D345 and H348.

The protein belongs to the 'GDSL' lipolytic enzyme family.

It is found in the secreted. This chain is GDSL esterase/lipase At1g31550, found in Arabidopsis thaliana (Mouse-ear cress).